Reading from the N-terminus, the 504-residue chain is MSQEKYIMAIDQGTTSSRAIIFNQKGEKVSSSQKEFPQIFPHAGWVEHNANQIWNSVQSVIAGAFIESSIKPSQIEAIGITNQRETTVVWDKKTGVPIYNAIVWQSRQTAPIAEQLKQDGHTKMIHEKTGLVIDAYFSATKIRWILDHVPGAQERAEKGELLFGTIDTWLVWKLTDGAVHVTDYSNAARTMLYNIKDLTWDDEILELLNIPKDMLPEVKSNSEIYGKTAAFHFYGGEVPISGMAGDQQAALFGQLAFDPGMVKNTYGTGSFIIMNTGDEMQLSSNNLLTTIGYGINGKVHYALEGSIFIAGSAIQWLRDGLKMIETSPESEQFALASTSDDEVYVVPAFTGLGAPYWDSNARGSVFGLTRGTSKEDFVKATLQSIAYQVRDVIDTMQVDSGIDIQQLRVDGGAAMNNMLMQFQADILGIDIARAKNLETTALGAAFLAGLAVGYWEDMDALKELNATGQLFKASMNESRKEKLYKGWKRAVKATQVFTQDDDAE.

T14 lines the ADP pocket. Residues T14, T15, and S16 each contribute to the ATP site. T14 contributes to the sn-glycerol 3-phosphate binding site. R18 lines the ADP pocket. Residues R84, E85, and Y136 each contribute to the sn-glycerol 3-phosphate site. R84, E85, and Y136 together coordinate glycerol. The residue at position 232 (H232) is a Phosphohistidine; by HPr. A sn-glycerol 3-phosphate-binding site is contributed by D246. The glycerol site is built by D246 and Q247. The ADP site is built by T268 and G311. ATP contacts are provided by T268, G311, Q315, and G412. 2 residues coordinate ADP: G412 and N416.

It belongs to the FGGY kinase family. In terms of assembly, homotetramer and homodimer (in equilibrium). The phosphoenolpyruvate-dependent sugar phosphotransferase system (PTS), including enzyme I, and histidine-containing protein (HPr) are required for the phosphorylation, which leads to the activation of the enzyme.

It catalyses the reaction glycerol + ATP = sn-glycerol 3-phosphate + ADP + H(+). The protein operates within polyol metabolism; glycerol degradation via glycerol kinase pathway; sn-glycerol 3-phosphate from glycerol: step 1/1. Activated by phosphorylation and inhibited by fructose 1,6-bisphosphate (FBP). Functionally, key enzyme in the regulation of glycerol uptake and metabolism. Catalyzes the phosphorylation of glycerol to yield sn-glycerol 3-phosphate. This chain is Glycerol kinase, found in Streptococcus pyogenes serotype M6 (strain ATCC BAA-946 / MGAS10394).